Consider the following 205-residue polypeptide: Ras-related protein rab-6.2 (205 aa).

Residues 18 to 25, T42, 66 to 70, and 124 to 127 contribute to the GTP site; these read EQSVGKTS, TAGQE, and KTDL. Residues C203 and C205 are each lipidated (S-geranylgeranyl cysteine). Residue C205 is modified to Cysteine methyl ester.

It belongs to the small GTPase superfamily. Rab family. In terms of assembly, interacts with GARP complex component vps-52. Interacts (in GTP-bound form) with lin-10. May interact (in GTP-bound form) with eat-17. As to expression, highly expressed in body wall muscles, pharyngeal and vulval muscles, hypodermis, intestine, the gonad, coelomocytes, and neurons, including command interneuron (at protein level). Highly expressed in the terminal bulb muscles.

Its subcellular location is the perikaryon. It is found in the cell projection. The protein resides in the dendrite. The protein localises to the golgi apparatus. It localises to the cytoplasmic vesicle. Its function is as follows. The small GTPases Rab are key regulators of intracellular membrane trafficking, from the formation of transport vesicles to their fusion with membranes. Rabs cycle between an inactive GDP-bound form and an active GTP-bound form that is able to recruit to membranes different set of downstream effectors directly responsible for vesicle formation, movement, tethering and fusion. In its active GTP-bound form, acts redundantly with rab-6.1 (in its active GTP-bound form) to positively regulate the retrograde trafficking of cargo molecules from endosomes to the Golgi compartment. Required for the retrograde trafficking of glr-1, a subunit of AMPA-type glutamate receptors (AMPRs), out of early endosomes and into the Golgi compartment in neurons. Its role in glr-1 trafficking may partly be mediated by its interaction with lin-10 and association with components of the retromer complex such as rme-8. Together with rab-6.2, promotes the retrograde trafficking of mig-14 from endosomes to Golgi structures in the intestine. Plays a role in the epidermis to promote cuticle integrity and impermeability of the cuticle barrier to exogenous molecules. May have a role in the glycosylation of the cuticular surface. Required for seam cell division and alae formation. Required for grinder formation, which is the feeding organ that breaks down food. In contrast to rab-6.1, may play a minor role in the exocytosis of secretory vesicles (cortical granules) during the oocyte-to-embryo transition. The chain is Ras-related protein rab-6.2 from Caenorhabditis elegans.